Reading from the N-terminus, the 71-residue chain is DNA-directed RNA polymerase subunit epsilon (71 aa).

The protein belongs to the RNA polymerase subunit epsilon family. RNAP is composed of a core of 2 alpha, a beta and a beta' subunit. The core is associated with a delta subunit, and at least one of epsilon or omega. When a sigma factor is associated with the core the holoenzyme is formed, which can initiate transcription.

The catalysed reaction is RNA(n) + a ribonucleoside 5'-triphosphate = RNA(n+1) + diphosphate. In terms of biological role, a non-essential component of RNA polymerase (RNAP). The chain is DNA-directed RNA polymerase subunit epsilon from Geobacillus thermodenitrificans (strain NG80-2).